Consider the following 475-residue polypeptide: MPPMELGKTKNVHIVGIGGAGMSAIAELLLKSGFAVSGSDLASGEVIDKLRELGAVIHQGHQAENVGASDVVVYSSAVRPESNVEILAAQKLGIPVIKRDEMLGELMRHKSGICVSGTHGKTTTTAMVATMLLEAGQSPTVMIGGVSDYLKGSTVVGEGKSMVIEADEYDRAFLKLTPTIAVLNSLESEHMDTYGTMDNLRDCFAEFANKVPFYGRVICCVDWPEIRRIIPRLNRRYTTFGIEEHADVMASEIEPGDGGSTFTVEAFGERYPGVRLNVPGRHNVLNALAAFSVGLEIGLPPERIIAGLARYSGMRRRFQVKYRGADGVLVIDDYAHHPTEVKATVRAARDGWKEHRIVAVFQPHLYSRTAEFAGEFGWALSRADTVYVAGIYPSREKAEDYPGITGELVAEASRTAGAKNVWFTEEHEALLAALQEEAAPETLFLFMGAGDITHLAARFAAWCTEMRSNADATAS.

117–123 (GTHGKTT) serves as a coordination point for ATP.

This sequence belongs to the MurCDEF family.

Its subcellular location is the cytoplasm. It carries out the reaction UDP-N-acetyl-alpha-D-muramate + L-alanine + ATP = UDP-N-acetyl-alpha-D-muramoyl-L-alanine + ADP + phosphate + H(+). The protein operates within cell wall biogenesis; peptidoglycan biosynthesis. Its function is as follows. Cell wall formation. This is UDP-N-acetylmuramate--L-alanine ligase from Chlorobaculum tepidum (strain ATCC 49652 / DSM 12025 / NBRC 103806 / TLS) (Chlorobium tepidum).